We begin with the raw amino-acid sequence, 563 residues long: Dihydroxy-acid dehydratase (563 aa).

Residue Cys51 participates in [2Fe-2S] cluster binding. Asp83 is a Mg(2+) binding site. [2Fe-2S] cluster is bound at residue Cys124. The Mg(2+) site is built by Asp125 and Lys126. The residue at position 126 (Lys126) is an N6-carboxylysine. Cys196 serves as a coordination point for [2Fe-2S] cluster. Glu448 contributes to the Mg(2+) binding site. Catalysis depends on Ser474, which acts as the Proton acceptor.

Belongs to the IlvD/Edd family. As to quaternary structure, homodimer. [2Fe-2S] cluster is required as a cofactor. The cofactor is Mg(2+).

It catalyses the reaction (2R)-2,3-dihydroxy-3-methylbutanoate = 3-methyl-2-oxobutanoate + H2O. The catalysed reaction is (2R,3R)-2,3-dihydroxy-3-methylpentanoate = (S)-3-methyl-2-oxopentanoate + H2O. Its pathway is amino-acid biosynthesis; L-isoleucine biosynthesis; L-isoleucine from 2-oxobutanoate: step 3/4. It functions in the pathway amino-acid biosynthesis; L-valine biosynthesis; L-valine from pyruvate: step 3/4. Functions in the biosynthesis of branched-chain amino acids. Catalyzes the dehydration of (2R,3R)-2,3-dihydroxy-3-methylpentanoate (2,3-dihydroxy-3-methylvalerate) into 2-oxo-3-methylpentanoate (2-oxo-3-methylvalerate) and of (2R)-2,3-dihydroxy-3-methylbutanoate (2,3-dihydroxyisovalerate) into 2-oxo-3-methylbutanoate (2-oxoisovalerate), the penultimate precursor to L-isoleucine and L-valine, respectively. In Polynucleobacter necessarius subsp. necessarius (strain STIR1), this protein is Dihydroxy-acid dehydratase.